The sequence spans 388 residues: Galactokinase (388 aa).

32–35 (EHTD) contacts substrate. Residues Ser66 and 123–129 (GASLSSS) contribute to the ATP site. Mg(2+) is bound by residues Ser129 and Glu161. Catalysis depends on Asp173, which acts as the Proton acceptor. Tyr223 serves as a coordination point for substrate.

This sequence belongs to the GHMP kinase family. GalK subfamily.

The protein localises to the cytoplasm. The catalysed reaction is alpha-D-galactose + ATP = alpha-D-galactose 1-phosphate + ADP + H(+). Its pathway is carbohydrate metabolism; galactose metabolism. Functionally, catalyzes the transfer of the gamma-phosphate of ATP to D-galactose to form alpha-D-galactose-1-phosphate (Gal-1-P). The sequence is that of Galactokinase from Staphylococcus carnosus (strain TM300).